Here is a 359-residue protein sequence, read N- to C-terminus: Membrane-bound lytic murein transglycosylase C (359 aa).

Residues 1-16 (MKKYLALALIAPLLIS) form the signal peptide. Residue Cys17 is the site of N-palmitoyl cysteine attachment. Cys17 carries S-diacylglycerol cysteine lipidation.

It belongs to the transglycosylase Slt family.

It is found in the cell outer membrane. The enzyme catalyses Exolytic cleavage of the (1-&gt;4)-beta-glycosidic linkage between N-acetylmuramic acid (MurNAc) and N-acetylglucosamine (GlcNAc) residues in peptidoglycan, from either the reducing or the non-reducing ends of the peptidoglycan chains, with concomitant formation of a 1,6-anhydrobond in the MurNAc residue.. Its function is as follows. Murein-degrading enzyme. May play a role in recycling of muropeptides during cell elongation and/or cell division. The protein is Membrane-bound lytic murein transglycosylase C of Escherichia coli O139:H28 (strain E24377A / ETEC).